The sequence spans 458 residues: Argininosuccinate lyase (458 aa).

Belongs to the lyase 1 family. Argininosuccinate lyase subfamily.

The protein resides in the cytoplasm. The catalysed reaction is 2-(N(omega)-L-arginino)succinate = fumarate + L-arginine. The protein operates within amino-acid biosynthesis; L-arginine biosynthesis; L-arginine from L-ornithine and carbamoyl phosphate: step 3/3. This chain is Argininosuccinate lyase, found in Pelobacter propionicus (strain DSM 2379 / NBRC 103807 / OttBd1).